We begin with the raw amino-acid sequence, 357 residues long: Heat-inducible transcription repressor HrcA (357 aa).

It belongs to the HrcA family.

Negative regulator of class I heat shock genes (grpE-dnaK-dnaJ and groELS operons). Prevents heat-shock induction of these operons. The sequence is that of Heat-inducible transcription repressor HrcA from Chlorobium phaeobacteroides (strain DSM 266 / SMG 266 / 2430).